The primary structure comprises 107 residues: UPF0060 membrane protein Atu1058 (107 aa).

Helical transmembrane passes span 5–25 (LIYV…WAWL), 32–52 (WILL…TLVA), 59–79 (AYAA…WGVE), and 85–105 (RWDI…LFGP).

The protein belongs to the UPF0060 family.

The protein localises to the cell inner membrane. This chain is UPF0060 membrane protein Atu1058, found in Agrobacterium fabrum (strain C58 / ATCC 33970) (Agrobacterium tumefaciens (strain C58)).